A 489-amino-acid polypeptide reads, in one-letter code: Protein-export membrane protein SecD (489 aa).

Helical transmembrane passes span 17 to 37, 328 to 348, 356 to 376, 384 to 404, 428 to 448, and 450 to 470; these read VLIV…IPPA, FIQI…AFMV, SIVV…LGIA, LASI…LVVI, LGII…LALM, and LSTL…GVIF.

The protein belongs to the SecD/SecF family. SecD subfamily. As to quaternary structure, part of the protein translocation apparatus. Forms a complex with SecF.

The protein localises to the cell membrane. Functionally, involved in protein export. The polypeptide is Protein-export membrane protein SecD (Methanolacinia petrolearia (strain DSM 11571 / OCM 486 / SEBR 4847) (Methanoplanus petrolearius)).